The primary structure comprises 290 residues: Probable prolyl 4-hydroxylase 8 (290 aa).

Residues 1-19 (MAKKPKQLRNKPRKSFSTQ) lie on the Cytoplasmic side of the membrane. A helical; Signal-anchor for type II membrane protein membrane pass occupies residues 20-40 (TFTVVVLVLFVILILVGLGIF). At 41 to 290 (SLPSTNKTSS…TKWFHVHEYN (250 aa)) the chain is on the lumenal side. Asn-46 carries N-linked (GlcNAc...) asparagine glycosylation. Positions 163 to 286 (NGEGLQVLHY…KWSSTKWFHV (124 aa)) constitute a Fe2OG dioxygenase domain. His-181 and Asp-183 together coordinate Fe cation. An N-linked (GlcNAc...) asparagine glycan is attached at Asn-222. Position 267 (His-267) interacts with Fe cation. Lys-277 contributes to the 2-oxoglutarate binding site.

It belongs to the P4HA family. The cofactor is Fe(2+). It depends on L-ascorbate as a cofactor.

It localises to the endoplasmic reticulum membrane. It carries out the reaction L-prolyl-[collagen] + 2-oxoglutarate + O2 = trans-4-hydroxy-L-prolyl-[collagen] + succinate + CO2. Functionally, catalyzes the post-translational formation of 4-hydroxyproline in -Xaa-Pro-Gly- sequences in proline-rich peptide sequences of plant glycoproteins and other proteins. Hydroxyprolines are important constituent of many plant cell wall glycoproteins such as extensins, hydroxyproline-rich glycoproteins, lectins and arabinogalactan proteins. This chain is Probable prolyl 4-hydroxylase 8, found in Arabidopsis thaliana (Mouse-ear cress).